A 476-amino-acid chain; its full sequence is Transcription factor Sox-9-B (476 aa).

Disordered regions lie at residues 1-67 (MNLL…TEDE), 157-197 (EAER…EQTH), and 209-274 (ADSP…FRDV). Over residues 30–41 (SAGSPCPSGSGS) the composition is skewed to low complexity. The segment covering 42 to 52 (DTENTRPQENT) has biased composition (polar residues). Basic and acidic residues-rich tracts occupy residues 56–67 (GDQEMKKETEDE) and 157–174 (EAER…DYKY). K61 is covalently cross-linked (Glycyl lysine isopeptide (Lys-Gly) (interchain with G-Cter in SUMO)). A DNA-binding region (HMG box) is located at residues 105–173 (VKRPMNAFMV…QHKKDHPDYK (69 aa)). Polar residues predominate over residues 211–220 (SPHSTSSMSE). 2 short sequence motifs (9aaTAD) span residues 276-285 (IGELSSEVIS) and 291-299 (DVNEFDQYL). Residues 318–383 (YGISSTPSAT…SDQQQQHSPQ (66 aa)) form a disordered region. Over residues 319 to 344 (GISSTPSATTGAGSAWMSKQQQQPQQ) the composition is skewed to low complexity. The span at 345 to 360 (HSLSTINSEQSQSQQR) shows a compositional bias: polar residues. Residue K364 forms a Glycyl lysine isopeptide (Lys-Gly) (interchain with G-Cter in SUMO) linkage. Residues 369–383 (SPSHYSDQQQQHSPQ) show a composition bias toward low complexity. Residues 427-435 (SGLYSNFTY) carry the 9aaTAD 3 motif. A disordered region spans residues 443–476 (MYTPIADTTGVPSIPQTHSPQHWEQPVYTQLTRP). The segment covering 452–476 (GVPSIPQTHSPQHWEQPVYTQLTRP) has biased composition (polar residues).

As to quaternary structure, interacts with the sumoylation factors ube2i/ubc9 and sumo1. Post-translationally, sumoylated. Lys-364 is the major site of sumoylation, although sumoylation at Lys-61 also occurs. Sumoylation plays a key role in regulating formation of the neural crest and otic placode.

It is found in the nucleus. It localises to the cytoplasm. In terms of biological role, transcription factor that plays a key role in chondrocytes differentiation and skeletal development. Specifically binds the 5'-ACAAAG-3' DNA motif present in enhancers and super-enhancers and promotes expression of genes important for chondrogenesis, including COL2A1. Plays a central role in successive steps of chondrocyte differentiation. Absolutely required for precartilaginous condensation, the first step in chondrogenesis during which skeletal progenitors differentiate into prechondrocytes. Together with SOX5 and SOX6, required for overt chondrogenesis when condensed prechondrocytes differentiate into early stage chondrocytes, the second step in chondrogenesis. Later, required to direct hypertrophic maturation and block osteoblast differentiation of growth plate chondrocytes: maintains chondrocyte columnar proliferation, delays prehypertrophy and then prevents osteoblastic differentiation of chondrocytes. Also required for chondrocyte hypertrophy, both indirectly, by keeping the lineage fate of chondrocytes, and directly, by remaining present in upper hypertrophic cells. Low lipid levels are the main nutritional determinant for chondrogenic commitment of skeletal progenitor cells: when lipids levels are low, FOXO transcription factors promote expression of SOX9, which induces chondrogenic commitment and suppresses fatty acid oxidation. In addition to cartilage development, also acts as a regulator of proliferation and differentiation in epithelial stem/progenitor cells. This is Transcription factor Sox-9-B (sox9-b) from Xenopus laevis (African clawed frog).